We begin with the raw amino-acid sequence, 539 residues long: Copine-C (539 aa).

C2 domains lie at 1-120 (MIPS…KIVA) and 128-251 (VTGK…PLIN). Ca(2+)-binding residues include L23, D24, D30, D83, D85, and D98. The 218-residue stretch at 290-507 (SLMTAIDCTG…ALAQETLKEI (218 aa)) folds into the VWFA domain.

This sequence belongs to the copine family. Ca(2+) serves as cofactor.

This chain is Copine-C (cpnC), found in Dictyostelium discoideum (Social amoeba).